A 198-amino-acid polypeptide reads, in one-letter code: Pyridoxine/pyridoxamine 5'-phosphate oxidase 2 (198 aa).

Residues R42, 59-60 (NT), K66, and 121-122 (RS) each bind FMN.

Belongs to the pyridoxamine 5'-phosphate oxidase family. As to quaternary structure, homodimer. Requires FMN as cofactor.

The enzyme catalyses pyridoxamine 5'-phosphate + O2 + H2O = pyridoxal 5'-phosphate + H2O2 + NH4(+). It catalyses the reaction pyridoxine 5'-phosphate + O2 = pyridoxal 5'-phosphate + H2O2. It participates in cofactor metabolism; pyridoxal 5'-phosphate salvage; pyridoxal 5'-phosphate from pyridoxamine 5'-phosphate: step 1/1. The protein operates within cofactor metabolism; pyridoxal 5'-phosphate salvage; pyridoxal 5'-phosphate from pyridoxine 5'-phosphate: step 1/1. Functionally, catalyzes the oxidation of either pyridoxine 5'-phosphate (PNP) or pyridoxamine 5'-phosphate (PMP) into pyridoxal 5'-phosphate (PLP). Has an in vitro catalytic efficiency for PNP approximately 300-fold lower than that of PPOX1. This Arabidopsis thaliana (Mouse-ear cress) protein is Pyridoxine/pyridoxamine 5'-phosphate oxidase 2 (PPOX2).